The following is a 382-amino-acid chain: Alanine racemase 1 (382 aa).

Lys39 serves as the catalytic Proton acceptor; specific for D-alanine. Position 39 is an N6-(pyridoxal phosphate)lysine (Lys39). Arg138 is a binding site for substrate. Tyr265 functions as the Proton acceptor; specific for L-alanine in the catalytic mechanism. Position 312 (Met312) interacts with substrate.

Belongs to the alanine racemase family. Pyridoxal 5'-phosphate serves as cofactor.

It carries out the reaction L-alanine = D-alanine. Its pathway is amino-acid biosynthesis; D-alanine biosynthesis; D-alanine from L-alanine: step 1/1. Functionally, catalyzes the interconversion of L-alanine and D-alanine. May also act on other amino acids. The sequence is that of Alanine racemase 1 (alr1) from Staphylococcus aureus (strain MRSA252).